The following is a 318-amino-acid chain: Methionyl-tRNA formyltransferase (318 aa).

112-115 (SILP) lines the (6S)-5,6,7,8-tetrahydrofolate pocket.

This sequence belongs to the Fmt family.

The enzyme catalyses L-methionyl-tRNA(fMet) + (6R)-10-formyltetrahydrofolate = N-formyl-L-methionyl-tRNA(fMet) + (6S)-5,6,7,8-tetrahydrofolate + H(+). Attaches a formyl group to the free amino group of methionyl-tRNA(fMet). The formyl group appears to play a dual role in the initiator identity of N-formylmethionyl-tRNA by promoting its recognition by IF2 and preventing the misappropriation of this tRNA by the elongation apparatus. The polypeptide is Methionyl-tRNA formyltransferase (Shewanella sp. (strain MR-4)).